Consider the following 290-residue polypeptide: Ribosomal RNA small subunit methyltransferase A (290 aa).

S-adenosyl-L-methionine is bound by residues asparagine 27, leucine 29, glycine 54, glutamate 75, aspartate 100, and asparagine 125.

The protein belongs to the class I-like SAM-binding methyltransferase superfamily. rRNA adenine N(6)-methyltransferase family. RsmA subfamily.

The protein localises to the cytoplasm. The catalysed reaction is adenosine(1518)/adenosine(1519) in 16S rRNA + 4 S-adenosyl-L-methionine = N(6)-dimethyladenosine(1518)/N(6)-dimethyladenosine(1519) in 16S rRNA + 4 S-adenosyl-L-homocysteine + 4 H(+). In terms of biological role, specifically dimethylates two adjacent adenosines (A1518 and A1519) in the loop of a conserved hairpin near the 3'-end of 16S rRNA in the 30S particle. May play a critical role in biogenesis of 30S subunits. The polypeptide is Ribosomal RNA small subunit methyltransferase A (Streptococcus pneumoniae (strain 70585)).